The following is a 64-amino-acid chain: Conotoxin reg3k (64 aa).

A signal peptide spans 1 to 20 (MMFKLGVLLTICLLLFPLTA). Positions 21–48 (LQLDWDQPGDHMLDISSEIDDRWFDPVR) are excised as a propeptide. 3 disulfides stabilise this stretch: Cys-50–Cys-60, Cys-51–Cys-58, and Cys-56–Cys-61. Pro-59 bears the 4-hydroxyproline mark.

Expressed by the venom duct.

The protein resides in the secreted. The polypeptide is Conotoxin reg3k (Conus regius (Crown cone)).